The primary structure comprises 70 residues: Putative membrane protein insertion efficiency factor (70 aa).

This sequence belongs to the UPF0161 family.

The protein localises to the cell membrane. Could be involved in insertion of integral membrane proteins into the membrane. The sequence is that of Putative membrane protein insertion efficiency factor from Chloroflexus aurantiacus (strain ATCC 29366 / DSM 635 / J-10-fl).